The following is a 278-amino-acid chain: HTH-type transcriptional activator RhaS (278 aa).

The region spanning 174 to 272 (NLLLAWLEDH…NWSPRDIRQG (99 aa)) is the HTH araC/xylS-type domain. DNA-binding regions (H-T-H motif) lie at residues 191–212 (DAVA…KQQT) and 239–262 (VTDI…RREF).

As to quaternary structure, binds DNA as a dimer.

It localises to the cytoplasm. Activates expression of the rhaBAD and rhaT operons. This is HTH-type transcriptional activator RhaS from Escherichia coli O81 (strain ED1a).